A 121-amino-acid polypeptide reads, in one-letter code: Small ribosomal subunit protein uS13 (121 aa).

Residues 91–121 (HRMSLPVRGQRTRTNARTRRGSRKTVAGRKK) are disordered. Positions 100 to 121 (QRTRTNARTRRGSRKTVAGRKK) are enriched in basic residues.

The protein belongs to the universal ribosomal protein uS13 family. In terms of assembly, part of the 30S ribosomal subunit. Forms a loose heterodimer with protein S19. Forms two bridges to the 50S subunit in the 70S ribosome.

Located at the top of the head of the 30S subunit, it contacts several helices of the 16S rRNA. In the 70S ribosome it contacts the 23S rRNA (bridge B1a) and protein L5 of the 50S subunit (bridge B1b), connecting the 2 subunits; these bridges are implicated in subunit movement. Contacts the tRNAs in the A and P-sites. The sequence is that of Small ribosomal subunit protein uS13 from Prochlorococcus marinus (strain MIT 9515).